The primary structure comprises 418 residues: NADH-quinone oxidoreductase subunit D (418 aa).

It belongs to the complex I 49 kDa subunit family. In terms of assembly, NDH-1 is composed of 14 different subunits. Subunits NuoB, C, D, E, F, and G constitute the peripheral sector of the complex.

The protein resides in the cell inner membrane. The enzyme catalyses a quinone + NADH + 5 H(+)(in) = a quinol + NAD(+) + 4 H(+)(out). NDH-1 shuttles electrons from NADH, via FMN and iron-sulfur (Fe-S) centers, to quinones in the respiratory chain. The immediate electron acceptor for the enzyme in this species is believed to be ubiquinone. Couples the redox reaction to proton translocation (for every two electrons transferred, four hydrogen ions are translocated across the cytoplasmic membrane), and thus conserves the redox energy in a proton gradient. The chain is NADH-quinone oxidoreductase subunit D from Bordetella pertussis (strain Tohama I / ATCC BAA-589 / NCTC 13251).